The primary structure comprises 198 residues: ATP-dependent Clp protease proteolytic subunit (198 aa).

S98 (nucleophile) is an active-site residue. Residue H123 is part of the active site.

This sequence belongs to the peptidase S14 family. As to quaternary structure, fourteen ClpP subunits assemble into 2 heptameric rings which stack back to back to give a disk-like structure with a central cavity, resembling the structure of eukaryotic proteasomes.

The protein resides in the cytoplasm. The enzyme catalyses Hydrolysis of proteins to small peptides in the presence of ATP and magnesium. alpha-casein is the usual test substrate. In the absence of ATP, only oligopeptides shorter than five residues are hydrolyzed (such as succinyl-Leu-Tyr-|-NHMec, and Leu-Tyr-Leu-|-Tyr-Trp, in which cleavage of the -Tyr-|-Leu- and -Tyr-|-Trp bonds also occurs).. Its function is as follows. Cleaves peptides in various proteins in a process that requires ATP hydrolysis. Has a chymotrypsin-like activity. Plays a major role in the degradation of misfolded proteins. This Halothermothrix orenii (strain H 168 / OCM 544 / DSM 9562) protein is ATP-dependent Clp protease proteolytic subunit.